Consider the following 529-residue polypeptide: Beta-hexosaminidase subunit alpha (529 aa).

The N-terminal stretch at 1-22 is a signal peptide; it reads MAGSTLRFSLLLAAAFAGRATA. Residues 23–88 constitute a propeptide that is removed on maturation; sequence LWPWPQYIQT…RFPHPIEKRH (66 aa). The cysteines at positions 58 and 104 are disulfide-linked. Asparagine 115, asparagine 157, and asparagine 295 each carry an N-linked (GlcNAc...) asparagine glycan. Cysteine 277 and cysteine 328 form a disulfide bridge. Glutamate 323 functions as the Proton donor in the catalytic mechanism. The tract at residues 423–424 is critical for hydrolysis GM2 gangliosides; sequence NH. Cysteine 505 and cysteine 522 are oxidised to a cystine.

Belongs to the glycosyl hydrolase 20 family. In terms of assembly, there are 3 beta-hexosaminidase isozymes: isozyme A (hexosaminidase A) is a heterodimer composed of one subunit alpha and one subunit beta (chain A and B); isozyme B (hexosaminidase B) is a homodimer of two beta subunits (two chains A and B); isozyme S (hexosaminidase S) is a homodimer of two alpha subunits. The composition of the dimer (isozyme A versus isozyme S) has a significant effect on the substrate specificity of the alpha subunit active site.

The protein localises to the lysosome. The catalysed reaction is Hydrolysis of terminal non-reducing N-acetyl-D-hexosamine residues in N-acetyl-beta-D-hexosaminides.. It carries out the reaction N-acetyl-beta-D-galactosaminyl-(1-&gt;4)-beta-D-3-sulfogalactosyl-(1-&gt;4)-beta-D-glucosyl-(1&lt;-&gt;1')-ceramide + H2O = a beta-D-3-sulfogalactosyl-(1-&gt;4)-beta-D-glucosyl-(1&lt;-&gt;1')-ceramide + N-acetyl-beta-D-galactosamine. It catalyses the reaction a ganglioside GM2 (d18:1(4E)) + H2O = a ganglioside GM3 (d18:1(4E)) + N-acetyl-beta-D-galactosamine. The enzyme catalyses a ganglioside GM2 + H2O = a ganglioside GM3 + N-acetyl-beta-D-galactosamine. The catalysed reaction is beta-D-GalNAc-(1-&gt;4)-alpha-L-IdoA-(1-&gt;3)-beta-D-GalNAc-4-sulfate-(1-&gt;4)-alpha-L-IdoA-(1-&gt;3)-D-GalNAc-4-sulfate + H2O = alpha-L-IdoA-(1-&gt;3)-beta-D-GalNAc-4-sulfate-(1-&gt;4)-alpha-L-IdoA-(1-&gt;3)-D-GalNAc-4-sulfate + N-acetyl-D-galactosamine. It carries out the reaction N-acetyl-beta-D-6-sulfogalactosaminyl-(1-&gt;4)-alpha-L-iduronyl-(1-&gt;3)-N-acetyl-D-6-sulfogalactosamine + H2O = alpha-L-iduronyl-(1-&gt;3)-N-acetyl-D-6-sulfogalactosamine + N-acetyl-D-6-sulfogalactosamine. Its activity is regulated as follows. Addition of GM2A stimulates the hydrolysis of sulfated glycosphingolipid SM2 and the ganglioside GM2. In terms of biological role, hydrolyzes the non-reducing end N-acetyl-D-hexosamine and/or sulfated N-acetyl-D-hexosamine of glycoconjugates, such as the oligosaccharide moieties from proteins and neutral glycolipids, or from certain mucopolysaccharides. The isozyme S is as active as the isozyme A on the anionic bis-sulfated glycans, the chondroitin-6-sulfate trisaccharide (C6S-3), and the dermatan sulfate pentasaccharide, and the sulfated glycosphingolipid SM2. The isozyme B does not hydrolyze each of these substrates, however hydrolyzes efficiently neutral oligosaccharide. Only the isozyme A is responsible for the degradation of GM2 gangliosides in the presence of GM2A. This Bos taurus (Bovine) protein is Beta-hexosaminidase subunit alpha.